Consider the following 444-residue polypeptide: Ribulose bisphosphate carboxylase (444 aa).

Lys-163 (proton acceptor) is an active-site residue. Lys-165 provides a ligand contact to substrate. The Mg(2+) site is built by Lys-189, Asp-191, and Glu-192. At Lys-189 the chain carries N6-carboxylysine. Residue His-281 is the Proton acceptor of the active site. Substrate contacts are provided by residues Arg-282, His-314, 367 to 369, and 389 to 392; these read SGG and QLGG.

This sequence belongs to the RuBisCO large chain family. Type III subfamily. Homodimer or homodecamer. In contrast to form I RuBisCO, the form III RuBisCO is composed solely of large subunits. It depends on Mg(2+) as a cofactor.

It catalyses the reaction 2 (2R)-3-phosphoglycerate + 2 H(+) = D-ribulose 1,5-bisphosphate + CO2 + H2O. The enzyme catalyses D-ribulose 1,5-bisphosphate + O2 = 2-phosphoglycolate + (2R)-3-phosphoglycerate + 2 H(+). Catalyzes the addition of molecular CO(2) and H(2)O to ribulose 1,5-bisphosphate (RuBP), generating two molecules of 3-phosphoglycerate (3-PGA). Functions in an archaeal AMP degradation pathway, together with AMP phosphorylase and R15P isomerase. The chain is Ribulose bisphosphate carboxylase from Thermococcus onnurineus (strain NA1).